The following is a 579-amino-acid chain: ATP-dependent RNA helicase SUV3, mitochondrial (579 aa).

The transit peptide at 1–59 directs the protein to the mitochondrion; sequence MAVAAALLRRRALYSALASPSWLHDTSSCYICSISGTHSLVNHPNLRLQRGYHNSGKFD. The Helicase ATP-binding domain maps to 72-213; it reads NAREKKRNVF…QRILEPTGDV (142 aa). 85 to 92 is a binding site for ATP; that stretch reads GPTNSGKT. The Helicase C-terminal domain occupies 214–388; sequence VTVQYYERLS…GLFPTFDVLS (175 aa). An N-linked (GlcNAc...) asparagine glycan is attached at asparagine 309.

Belongs to the helicase family. As to quaternary structure, homodimer; in free form. Component of the mitochondrial degradosome (mtEXO) complex which is a heteropentamer containing 2 copies of SUPV3L1 and 3 copies of PNPT1. Mg(2+) serves as cofactor. Mn(2+) is required as a cofactor.

The protein localises to the nucleus. The protein resides in the mitochondrion matrix. Its subcellular location is the mitochondrion nucleoid. The catalysed reaction is ATP + H2O = ADP + phosphate + H(+). Its function is as follows. Major helicase player in mitochondrial RNA metabolism. Component of the mitochondrial degradosome (mtEXO) complex, that degrades 3' overhang double-stranded RNA with a 3'-to-5' directionality in an ATP-dependent manner. ATPase and ATP-dependent multisubstrate helicase, able to unwind double-stranded (ds) DNA and RNA, and RNA/DNA heteroduplexes in the 5'-to-3' direction. Plays a role in the RNA surveillance system in mitochondria; regulates the stability of mature mRNAs, the removal of aberrantly formed mRNAs and the rapid degradation of non coding processing intermediates. Confers salinity and drought stress tolerances by maintaining both photosynthesis and antioxidant machinery, probably via an increase in plant hormones levels such as gibberellic acid (GA(3)), the cytokinin zeatin (Z) and indole-3-acetic acid (IAA). The chain is ATP-dependent RNA helicase SUV3, mitochondrial from Oryza sativa subsp. japonica (Rice).